A 73-amino-acid chain; its full sequence is Translation initiation factor IF-1 (73 aa).

The region spanning 1 to 73 is the S1-like domain; that stretch reads MAKKDGVIEI…TRGRIVYRYK (73 aa).

This sequence belongs to the IF-1 family. In terms of assembly, component of the 30S ribosomal translation pre-initiation complex which assembles on the 30S ribosome in the order IF-2 and IF-3, IF-1 and N-formylmethionyl-tRNA(fMet); mRNA recruitment can occur at any time during PIC assembly.

The protein resides in the cytoplasm. Functionally, one of the essential components for the initiation of protein synthesis. Stabilizes the binding of IF-2 and IF-3 on the 30S subunit to which N-formylmethionyl-tRNA(fMet) subsequently binds. Helps modulate mRNA selection, yielding the 30S pre-initiation complex (PIC). Upon addition of the 50S ribosomal subunit IF-1, IF-2 and IF-3 are released leaving the mature 70S translation initiation complex. In Paenarthrobacter aurescens (strain TC1), this protein is Translation initiation factor IF-1.